Reading from the N-terminus, the 558-residue chain is Formate--tetrahydrofolate ligase (558 aa).

Residue 67-74 participates in ATP binding; it reads TPAGEGKT.

It belongs to the formate--tetrahydrofolate ligase family.

The enzyme catalyses (6S)-5,6,7,8-tetrahydrofolate + formate + ATP = (6R)-10-formyltetrahydrofolate + ADP + phosphate. It participates in one-carbon metabolism; tetrahydrofolate interconversion. The protein is Formate--tetrahydrofolate ligase of Sphingobium sp. (strain NBRC 103272 / SYK-6).